A 119-amino-acid polypeptide reads, in one-letter code: Large ribosomal subunit protein uL22 (119 aa).

The protein belongs to the universal ribosomal protein uL22 family. In terms of assembly, part of the 50S ribosomal subunit.

Its function is as follows. This protein binds specifically to 23S rRNA; its binding is stimulated by other ribosomal proteins, e.g. L4, L17, and L20. It is important during the early stages of 50S assembly. It makes multiple contacts with different domains of the 23S rRNA in the assembled 50S subunit and ribosome. In terms of biological role, the globular domain of the protein is located near the polypeptide exit tunnel on the outside of the subunit, while an extended beta-hairpin is found that lines the wall of the exit tunnel in the center of the 70S ribosome. The chain is Large ribosomal subunit protein uL22 from Trichormus variabilis (strain ATCC 29413 / PCC 7937) (Anabaena variabilis).